Here is a 164-residue protein sequence, read N- to C-terminus: Phosphopantetheine adenylyltransferase (164 aa).

Substrate is bound at residue S11. ATP is bound by residues 11–12 (SF) and H19. Substrate is bound by residues K43, A76, and R90. ATP-binding positions include 91-93 (GLR), E101, and 126-132 (YQHISSS).

This sequence belongs to the bacterial CoaD family. In terms of assembly, homohexamer. Mg(2+) serves as cofactor.

The protein localises to the cytoplasm. It carries out the reaction (R)-4'-phosphopantetheine + ATP + H(+) = 3'-dephospho-CoA + diphosphate. It participates in cofactor biosynthesis; coenzyme A biosynthesis; CoA from (R)-pantothenate: step 4/5. Reversibly transfers an adenylyl group from ATP to 4'-phosphopantetheine, yielding dephospho-CoA (dPCoA) and pyrophosphate. The sequence is that of Phosphopantetheine adenylyltransferase from Streptococcus sanguinis (strain SK36).